Here is a 547-residue protein sequence, read N- to C-terminus: uncharacterized protein (547 aa).

This sequence to B.subtilis RocB.

This is an uncharacterized protein from Bacillus subtilis (strain 168).